Consider the following 980-residue polypeptide: Glutamate receptor ionotropic, kainate 5 (980 aa).

Positions 1-14 (MPAELLLLLIVAFA) are cleaved as a signal peptide. Residues 15–544 (SPSCQVLSSL…YFSFLDPFSP (530 aa)) lie on the Extracellular side of the membrane. Disulfide bonds link cysteine 36/cysteine 292, cysteine 83/cysteine 334, and cysteine 165/cysteine 170. Asparagine 219, asparagine 271, asparagine 285, asparagine 322, asparagine 372, asparagine 394, asparagine 400, asparagine 407, asparagine 414, and asparagine 478 each carry an N-linked (GlcNAc...) asparagine glycan. A helical transmembrane segment spans residues 545 to 565 (AVWLFMLLAYLAVSCVLFLAA). The Cytoplasmic portion of the chain corresponds to 566-622 (RLSPYEWYNPHPCLRARPHILENQYTLGNSLWFPVGGFMQQGSEIMPRALSTRCVSG). Residues 623 to 643 (VWWAFTLIIISSYTANLAAFL) traverse the membrane as a helical segment. Over 644–803 (TVQRMEVPVE…HRAKGLGMEN (160 aa)) the chain is Extracellular. Asparagine 735 carries an N-linked (GlcNAc...) asparagine glycan. A helical membrane pass occupies residues 804-824 (IGGIFIVLICGLIIAVFVAVM). Residues 825–980 (EFIWSTRRSA…AGPRELAEHE (156 aa)) are Cytoplasmic-facing. 2 disordered regions span residues 891–927 (YSAG…PTPC) and 944–980 (ASGA…AEHE). Over residues 894 to 903 (GAGGDAGSAH) the composition is skewed to gly residues.

The protein belongs to the glutamate-gated ion channel (TC 1.A.10.1) family. GRIK5 subfamily. As to quaternary structure, homotetramer. Heterotetramer with GRIK2. Can form functional heteromeric receptors with GRIK1 and GRIK2. Can form functional heteromeric receptors with GRIK3.

Its subcellular location is the cell membrane. The protein localises to the postsynaptic cell membrane. The protein resides in the presynaptic cell membrane. Functionally, ionotropic glutamate receptor that functions as a cation-permeable ligand-gated ion channel, gated by L-glutamate and the glutamatergic agonist kainic acid. Cannot form functional channels on its own and produces channel activity only in heteromeric assembly with GRIK1 and GRIK2 subunits. Can form functional heteromeric receptors with GRIK3. This Homo sapiens (Human) protein is Glutamate receptor ionotropic, kainate 5 (GRIK5).